An 805-amino-acid chain; its full sequence is Endonuclease MutS2 (805 aa).

Gly-344–Thr-351 serves as a coordination point for ATP. Positions Arg-705 to Gly-724 are disordered. The 76-residue stretch at Leu-729–Arg-804 folds into the Smr domain.

This sequence belongs to the DNA mismatch repair MutS family. MutS2 subfamily. As to quaternary structure, homodimer. Binds to stalled ribosomes, contacting rRNA.

Its function is as follows. Endonuclease that is involved in the suppression of homologous recombination and thus may have a key role in the control of bacterial genetic diversity. Functionally, acts as a ribosome collision sensor, splitting the ribosome into its 2 subunits. Detects stalled/collided 70S ribosomes which it binds and splits by an ATP-hydrolysis driven conformational change. Acts upstream of the ribosome quality control system (RQC), a ribosome-associated complex that mediates the extraction of incompletely synthesized nascent chains from stalled ribosomes and their subsequent degradation. Probably generates substrates for RQC. This chain is Endonuclease MutS2, found in Anaeromyxobacter sp. (strain Fw109-5).